The sequence spans 328 residues: Porphobilinogen deaminase (328 aa).

Position 250 is an S-(dipyrrolylmethanemethyl)cysteine (C250).

Belongs to the HMBS family. As to quaternary structure, monomer. It depends on dipyrromethane as a cofactor.

It catalyses the reaction 4 porphobilinogen + H2O = hydroxymethylbilane + 4 NH4(+). Its pathway is porphyrin-containing compound metabolism; protoporphyrin-IX biosynthesis; coproporphyrinogen-III from 5-aminolevulinate: step 2/4. Functionally, tetrapolymerization of the monopyrrole PBG into the hydroxymethylbilane pre-uroporphyrinogen in several discrete steps. The protein is Porphobilinogen deaminase of Burkholderia ambifaria (strain ATCC BAA-244 / DSM 16087 / CCUG 44356 / LMG 19182 / AMMD) (Burkholderia cepacia (strain AMMD)).